The following is a 358-amino-acid chain: 2-oxoisovalerate dehydrogenase subunit beta 2, mitochondrial (358 aa).

Residues 1–16 (MAAALVRRFCRGSSFP) constitute a mitochondrion transit peptide. Tyr-119 provides a ligand contact to thiamine diphosphate. Positions 145, 147, 148, 198, and 200 each coordinate K(+).

As to quaternary structure, heterotetramer of alpha and beta chains. Requires thiamine diphosphate as cofactor. Expressed in the non-photosynthetic organs such as siliques, flowers and roots.

The protein localises to the mitochondrion matrix. It catalyses the reaction N(6)-[(R)-lipoyl]-L-lysyl-[protein] + 3-methyl-2-oxobutanoate + H(+) = N(6)-[(R)-S(8)-2-methylpropanoyldihydrolipoyl]-L-lysyl-[protein] + CO2. The branched-chain alpha-keto dehydrogenase complex catalyzes the overall conversion of alpha-keto acids to acyl-CoA and CO(2). It contains multiple copies of three enzymatic components: branched-chain alpha-keto acid decarboxylase (E1), lipoamide acyltransferase (E2) and lipoamide dehydrogenase (E3). Required during sugar starvation and acts under the control of a sugar-sensing mechanism involving Ser/Thr kinases and phosphatases. The polypeptide is 2-oxoisovalerate dehydrogenase subunit beta 2, mitochondrial (DIN4) (Arabidopsis thaliana (Mouse-ear cress)).